Consider the following 629-residue polypeptide: tRNA uridine 5-carboxymethylaminomethyl modification enzyme MnmG (629 aa).

Residue 13–18 coordinates FAD; that stretch reads GGGHAG. 273-287 contributes to the NAD(+) binding site; sequence GPRYCPSIEDKVVRF.

Belongs to the MnmG family. Homodimer. Heterotetramer of two MnmE and two MnmG subunits. The cofactor is FAD.

The protein localises to the cytoplasm. Its function is as follows. NAD-binding protein involved in the addition of a carboxymethylaminomethyl (cmnm) group at the wobble position (U34) of certain tRNAs, forming tRNA-cmnm(5)s(2)U34. This chain is tRNA uridine 5-carboxymethylaminomethyl modification enzyme MnmG, found in Nitrosococcus oceani (strain ATCC 19707 / BCRC 17464 / JCM 30415 / NCIMB 11848 / C-107).